We begin with the raw amino-acid sequence, 117 residues long: Huntingtin-interacting protein M (117 aa).

2 disordered regions span residues 1-30 (MSEKKNCKNSSTNNNQTQDPSRNELQVPRS) and 71-117 (EASN…RKND). The span at 72-81 (ASNNGSMRNT) shows a compositional bias: polar residues. A compositionally biased stretch (basic and acidic residues) spans 82–117 (SQDREREVDNNREPHSAESDVTRFLFDEMPKSRKND).

As to quaternary structure, may interact with the N-terminus of HD.

The protein is Huntingtin-interacting protein M of Homo sapiens (Human).